The following is a 540-amino-acid chain: 2-isopropylmalate synthase (540 aa).

Residues 8-273 enclose the Pyruvate carboxyltransferase domain; sequence VLIFDTTLRD…FFGRDEDSPT (266 aa). 4 residues coordinate Mn(2+): aspartate 17, histidine 208, histidine 210, and asparagine 244. The segment at 408–540 is regulatory domain; it reads QLKLVQVSCG…MAQLDSSPVH (133 aa).

It belongs to the alpha-IPM synthase/homocitrate synthase family. LeuA type 1 subfamily. As to quaternary structure, homodimer. The cofactor is Mn(2+).

It localises to the cytoplasm. It carries out the reaction 3-methyl-2-oxobutanoate + acetyl-CoA + H2O = (2S)-2-isopropylmalate + CoA + H(+). It functions in the pathway amino-acid biosynthesis; L-leucine biosynthesis; L-leucine from 3-methyl-2-oxobutanoate: step 1/4. Functionally, catalyzes the condensation of the acetyl group of acetyl-CoA with 3-methyl-2-oxobutanoate (2-ketoisovalerate) to form 3-carboxy-3-hydroxy-4-methylpentanoate (2-isopropylmalate). This chain is 2-isopropylmalate synthase, found in Synechococcus sp. (strain CC9311).